A 176-amino-acid polypeptide reads, in one-letter code: Large ribosomal subunit protein uL6 (176 aa).

Over residues 156–170 the composition is skewed to basic and acidic residues; that stretch reads YKGKGVRYADEQVRR. Residues 156–176 form a disordered region; sequence YKGKGVRYADEQVRRKEAKKK.

It belongs to the universal ribosomal protein uL6 family. Part of the 50S ribosomal subunit.

Functionally, this protein binds to the 23S rRNA, and is important in its secondary structure. It is located near the subunit interface in the base of the L7/L12 stalk, and near the tRNA binding site of the peptidyltransferase center. The chain is Large ribosomal subunit protein uL6 from Shewanella woodyi (strain ATCC 51908 / MS32).